A 358-amino-acid polypeptide reads, in one-letter code: DNA replication and repair protein RecF (358 aa).

30-37 contacts ATP; sequence GNNGSGKT.

Belongs to the RecF family.

The protein resides in the cytoplasm. Its function is as follows. The RecF protein is involved in DNA metabolism; it is required for DNA replication and normal SOS inducibility. RecF binds preferentially to single-stranded, linear DNA. It also seems to bind ATP. The polypeptide is DNA replication and repair protein RecF (Histophilus somni (strain 2336) (Haemophilus somnus)).